The chain runs to 214 residues: Adenylate kinase (214 aa).

10–15 (GAGKGT) is an ATP binding site. Residues 30–59 (STGDMFRDHKARGTEIGKQVQAIMDAGGLV) form an NMP region. Residues threonine 31, arginine 36, 57-59 (GLV), 85-88 (GYPR), and glutamine 92 each bind AMP. Positions 126–163 (GRRSCPRCGAVYHVSQNPPHRAGFCDRDDAALVQREDD) are LID. Arginine 127 is a binding site for ATP. Positions 130 and 133 each coordinate Zn(2+). 136–137 (VY) is an ATP binding site. Residues cysteine 150 and aspartate 153 each coordinate Zn(2+). AMP contacts are provided by arginine 160 and arginine 171. Glycine 199 is an ATP binding site.

The protein belongs to the adenylate kinase family. As to quaternary structure, monomer.

Its subcellular location is the cytoplasm. It catalyses the reaction AMP + ATP = 2 ADP. It participates in purine metabolism; AMP biosynthesis via salvage pathway; AMP from ADP: step 1/1. Its function is as follows. Catalyzes the reversible transfer of the terminal phosphate group between ATP and AMP. Plays an important role in cellular energy homeostasis and in adenine nucleotide metabolism. In Anaeromyxobacter dehalogenans (strain 2CP-1 / ATCC BAA-258), this protein is Adenylate kinase.